Here is a 480-residue protein sequence, read N- to C-terminus: Probable WRKY transcription factor 61 (480 aa).

Residues 30–108 (NQLMAKHNEP…RNYDDNEKSS (79 aa)) form a disordered region. Composition is skewed to basic and acidic residues over residues 57 to 66 (REKVNEREEL) and 84 to 106 (NKEE…DNEK). Residues 185-251 (CETPTMNDGC…YEGTHNHPLP (67 aa)) constitute a DNA-binding region (WRKY).

It localises to the nucleus. Functionally, transcription factor. Interacts specifically with the W box (5'-(T)TGAC[CT]-3'), a frequently occurring elicitor-responsive cis-acting element. This chain is Probable WRKY transcription factor 61 (WRKY61), found in Arabidopsis thaliana (Mouse-ear cress).